A 201-amino-acid chain; its full sequence is Potassium-transporting ATPase KdpC subunit (201 aa).

A helical transmembrane segment spans residues 10 to 30 (VVLVVLTVICGLAYPLAMTGI). The segment at 67–105 (HGRPSATSAADPADPTKTVSSPYNAANSSGSNLGPTSKA) is disordered. Low complexity predominate over residues 70–82 (PSATSAADPADPT). Over residues 83–105 (KTVSSPYNAANSSGSNLGPTSKA) the composition is skewed to polar residues.

It belongs to the KdpC family. In terms of assembly, the system is composed of three essential subunits: KdpA, KdpB and KdpC.

It localises to the cell inner membrane. In terms of biological role, part of the high-affinity ATP-driven potassium transport (or Kdp) system, which catalyzes the hydrolysis of ATP coupled with the electrogenic transport of potassium into the cytoplasm. This subunit acts as a catalytic chaperone that increases the ATP-binding affinity of the ATP-hydrolyzing subunit KdpB by the formation of a transient KdpB/KdpC/ATP ternary complex. The chain is Potassium-transporting ATPase KdpC subunit from Rhodopseudomonas palustris (strain BisB5).